A 2156-amino-acid polypeptide reads, in one-letter code: Probable capsid protein 3 (2156 aa).

Residues 1319–1345 (NKSNKSNKSNESDKSSESDKSSESSNH) form a disordered region. A compositionally biased stretch (basic and acidic residues) spans 1326 to 1345 (KSNESDKSSESDKSSESSNH).

The protein belongs to the NCLDV major capsid protein family.

The protein resides in the virion. The chain is Probable capsid protein 3 from Acanthamoeba polyphaga mimivirus (APMV).